Consider the following 83-residue polypeptide: Cytochrome b559 subunit alpha (83 aa).

The chain crosses the membrane as a helical span at residues 21–35 (IIHTITVPMLFLAGW). H23 contacts heme.

Belongs to the PsbE/PsbF family. As to quaternary structure, heterodimer of an alpha subunit and a beta subunit. PSII is composed of 1 copy each of membrane proteins PsbA, PsbB, PsbC, PsbD, PsbE, PsbF, PsbH, PsbI, PsbJ, PsbK, PsbL, PsbM, PsbT, PsbX, PsbY, PsbZ, Psb30/Ycf12, peripheral proteins PsbO, CyanoQ (PsbQ), PsbU, PsbV and a large number of cofactors. It forms dimeric complexes. It depends on heme b as a cofactor.

The protein resides in the cellular thylakoid membrane. Its function is as follows. This b-type cytochrome is tightly associated with the reaction center of photosystem II (PSII). PSII is a light-driven water:plastoquinone oxidoreductase that uses light energy to abstract electrons from H(2)O, generating O(2) and a proton gradient subsequently used for ATP formation. It consists of a core antenna complex that captures photons, and an electron transfer chain that converts photonic excitation into a charge separation. The protein is Cytochrome b559 subunit alpha of Acaryochloris marina (strain MBIC 11017).